We begin with the raw amino-acid sequence, 240 residues long: uncharacterized protein (240 aa).

This is an uncharacterized protein from Bacillus subtilis (strain 168).